The following is a 122-amino-acid chain: Large ribosomal subunit protein uL14 (122 aa).

It belongs to the universal ribosomal protein uL14 family. In terms of assembly, part of the 50S ribosomal subunit. Forms a cluster with proteins L3 and L19. In the 70S ribosome, L14 and L19 interact and together make contacts with the 16S rRNA in bridges B5 and B8.

Functionally, binds to 23S rRNA. Forms part of two intersubunit bridges in the 70S ribosome. This Sulfurimonas denitrificans (strain ATCC 33889 / DSM 1251) (Thiomicrospira denitrificans (strain ATCC 33889 / DSM 1251)) protein is Large ribosomal subunit protein uL14.